We begin with the raw amino-acid sequence, 270 residues long: tRNA pseudouridine synthase A (270 aa).

Asp51 (nucleophile) is an active-site residue. Tyr109 lines the substrate pocket.

Belongs to the tRNA pseudouridine synthase TruA family. Homodimer.

It catalyses the reaction uridine(38/39/40) in tRNA = pseudouridine(38/39/40) in tRNA. In terms of biological role, formation of pseudouridine at positions 38, 39 and 40 in the anticodon stem and loop of transfer RNAs. This Burkholderia vietnamiensis (strain G4 / LMG 22486) (Burkholderia cepacia (strain R1808)) protein is tRNA pseudouridine synthase A.